Reading from the N-terminus, the 288-residue chain is Shikimate dehydrogenase (NADP(+)) (288 aa).

Residues 21 to 23 and threonine 68 each bind shikimate; that span reads SLS. Lysine 72 serves as the catalytic Proton acceptor. Shikimate is bound by residues asparagine 93 and aspartate 108. NADP(+) is bound by residues 132-136 and leucine 230; that span reads GNGGA. Position 232 (tyrosine 232) interacts with shikimate. An NADP(+)-binding site is contributed by glycine 253.

It belongs to the shikimate dehydrogenase family. Homodimer.

It catalyses the reaction shikimate + NADP(+) = 3-dehydroshikimate + NADPH + H(+). It functions in the pathway metabolic intermediate biosynthesis; chorismate biosynthesis; chorismate from D-erythrose 4-phosphate and phosphoenolpyruvate: step 4/7. Involved in the biosynthesis of the chorismate, which leads to the biosynthesis of aromatic amino acids. Catalyzes the reversible NADPH linked reduction of 3-dehydroshikimate (DHSA) to yield shikimate (SA). This chain is Shikimate dehydrogenase (NADP(+)), found in Crocosphaera subtropica (strain ATCC 51142 / BH68) (Cyanothece sp. (strain ATCC 51142)).